Consider the following 1300-residue polypeptide: Serine protease EspP (1300 aa).

Positions 1–55 are cleaved as a signal peptide; it reads MNKIYSLKYSHITGGLIAVSELSGRVSSRATGKKKHKRILALCFLGLLQSSYSFA. One can recognise a Peptidase S6 domain in the interval 57 to 311; sequence QMDISNFYIR…NQTTIDNLKN (255 aa). Catalysis depends on charge relay system residues H127, D156, and S263. Positions 1034-1300 constitute an Autotransporter domain; sequence DINGEAGAWA…AVNANFRYSF (267 aa).

Cleaved to release the mature protein from the outer membrane.

The protein resides in the periplasm. It is found in the secreted. Its subcellular location is the cell surface. It localises to the cell outer membrane. With respect to regulation, inhibition of cytotoxic activity by phenylmethylsulfonyl fluoride. In terms of biological role, serine protease capable of cleaving pepsin A and human coagulation factor V, which may contribute to the mucosal hemorrhage observed in hemorrhagic colitis. In Escherichia coli O157:H7, this protein is Serine protease EspP (espP).